Consider the following 118-residue polypeptide: Small ribosomal subunit protein uS13 (118 aa).

The segment at 94–118 (GLPVRGQRTKTNARTRKGPRKPIKK) is disordered.

The protein belongs to the universal ribosomal protein uS13 family. As to quaternary structure, part of the 30S ribosomal subunit. Forms a loose heterodimer with protein S19. Forms two bridges to the 50S subunit in the 70S ribosome.

In terms of biological role, located at the top of the head of the 30S subunit, it contacts several helices of the 16S rRNA. In the 70S ribosome it contacts the 23S rRNA (bridge B1a) and protein L5 of the 50S subunit (bridge B1b), connecting the 2 subunits; these bridges are implicated in subunit movement. Contacts the tRNAs in the A and P-sites. This chain is Small ribosomal subunit protein uS13, found in Klebsiella pneumoniae (strain 342).